Consider the following 227-residue polypeptide: Ribosomal RNA large subunit methyltransferase E (227 aa).

Glycine 78, tryptophan 80, aspartate 103, aspartate 119, and aspartate 143 together coordinate S-adenosyl-L-methionine. Lysine 183 acts as the Proton acceptor in catalysis.

This sequence belongs to the class I-like SAM-binding methyltransferase superfamily. RNA methyltransferase RlmE family.

The protein localises to the cytoplasm. It catalyses the reaction uridine(2552) in 23S rRNA + S-adenosyl-L-methionine = 2'-O-methyluridine(2552) in 23S rRNA + S-adenosyl-L-homocysteine + H(+). Specifically methylates the uridine in position 2552 of 23S rRNA at the 2'-O position of the ribose in the fully assembled 50S ribosomal subunit. In Rickettsia typhi (strain ATCC VR-144 / Wilmington), this protein is Ribosomal RNA large subunit methyltransferase E.